The following is a 377-amino-acid chain: 4-hydroxy-tetrahydrodipicolinate synthase, chloroplastic (377 aa).

A chloroplast-targeting transit peptide spans 1 to 51 (MISPRMTTNLLPARTISLVSNGGAATASPSSPSVAARPRRPSSGTGRGKVS). The disordered stretch occupies residues 21-50 (NGGAATASPSSPSVAARPRRPSSGTGRGKV). Residues 24 to 44 (AATASPSSPSVAARPRRPSSG) are compositionally biased toward low complexity. Thr120 is a binding site for pyruvate. The active-site Proton donor/acceptor is Tyr206. The active-site Schiff-base intermediate with substrate is Lys234. Ile273 contributes to the pyruvate binding site.

It belongs to the DapA family.

It is found in the plastid. It localises to the chloroplast. The catalysed reaction is L-aspartate 4-semialdehyde + pyruvate = (2S,4S)-4-hydroxy-2,3,4,5-tetrahydrodipicolinate + H2O + H(+). It participates in amino-acid biosynthesis; L-lysine biosynthesis via DAP pathway; (S)-tetrahydrodipicolinate from L-aspartate: step 3/4. Its function is as follows. Catalyzes the condensation of (S)-aspartate-beta-semialdehyde [(S)-ASA] and pyruvate to 4-hydroxy-tetrahydrodipicolinate (HTPA). The chain is 4-hydroxy-tetrahydrodipicolinate synthase, chloroplastic (DAPA) from Coix lacryma-jobi (Job's tears).